The chain runs to 412 residues: Serine hydroxymethyltransferase (412 aa).

Residues leucine 117 and 121–123 each bind (6S)-5,6,7,8-tetrahydrofolate; that span reads GHL. Lysine 226 bears the N6-(pyridoxal phosphate)lysine mark. 349–351 contributes to the (6S)-5,6,7,8-tetrahydrofolate binding site; it reads SPF.

The protein belongs to the SHMT family. Homodimer. Requires pyridoxal 5'-phosphate as cofactor.

It is found in the cytoplasm. It catalyses the reaction (6R)-5,10-methylene-5,6,7,8-tetrahydrofolate + glycine + H2O = (6S)-5,6,7,8-tetrahydrofolate + L-serine. The protein operates within one-carbon metabolism; tetrahydrofolate interconversion. Its pathway is amino-acid biosynthesis; glycine biosynthesis; glycine from L-serine: step 1/1. Catalyzes the reversible interconversion of serine and glycine with tetrahydrofolate (THF) serving as the one-carbon carrier. This reaction serves as the major source of one-carbon groups required for the biosynthesis of purines, thymidylate, methionine, and other important biomolecules. Also exhibits THF-independent aldolase activity toward beta-hydroxyamino acids, producing glycine and aldehydes, via a retro-aldol mechanism. This Geobacillus kaustophilus (strain HTA426) protein is Serine hydroxymethyltransferase.